The sequence spans 562 residues: Efflux pump apf11 (562 aa).

Low complexity-rich tracts occupy residues 1–10 (MGDISAATKA) and 18–30 (TPET…SSDT). A disordered region spans residues 1-36 (MGDISAATKAPAPPTPATPETNTTSSSSDTDVQHEP). Asn22 is a glycosylation site (N-linked (GlcNAc...) asparagine). 8 helical membrane-spanning segments follow: residues 46 to 66 (LVIF…TIVA), 83 to 103 (AWYG…FGKI), 110 to 130 (KLVF…CALA), 141 to 161 (AIAG…TALT), 169 to 189 (VYTA…PIIG), 200 to 220 (WCFW…VFCL), 249 to 269 (GGLA…WGGT), and 278 to 298 (IIVL…HQHW). Residue Asn312 is glycosylated (N-linked (GlcNAc...) asparagine). The next 6 membrane-spanning stretches (helical) occupy residues 317–337 (MFLL…YYLP), 356–376 (LAMV…AGAV), 382–404 (FVFF…HPSI), 414–434 (ILFG…VQVA), 447–467 (VMLV…TLFL), and 516–536 (FLIG…IRWI).

Belongs to the major facilitator superfamily. TCR/Tet family.

It localises to the membrane. The protein operates within secondary metabolite biosynthesis. Its function is as follows. Efflux pump; part of the gene cluster that mediates the biosynthesis of the cyclic tetrapeptide apicidin F (APF). The protein is Efflux pump apf11 (apf11) of Gibberella fujikuroi (strain CBS 195.34 / IMI 58289 / NRRL A-6831) (Bakanae and foot rot disease fungus).